The primary structure comprises 336 residues: Mitochondrial thiamine pyrophosphate carrier 1 (336 aa).

Solcar repeat units lie at residues 11 to 98 (ISST…VNQV), 112 to 202 (SSGA…VKDS), and 221 to 323 (TKGW…SLSI). 6 helical membrane-spanning segments follow: residues 17–37 (MLCGGIAGMVSRFCIAPLDVV), 66–86 (GVTALWKGNIPAELLYVFYGA), 118–138 (FIAGATAGAGATIATYPFDLF), 177–197 (GVSSSIISIAPYMGLFFASYG), 228–244 (TAGLCAGTASKALVFPL), and 298–315 (GFLVSLIKSAPTSAITMY).

This sequence belongs to the mitochondrial carrier (TC 2.A.29) family.

It is found in the mitochondrion inner membrane. In terms of biological role, mitochondrial transporter that mediates uptake of thiamine pyrophosphate (ThPP) into mitochondria. The chain is Mitochondrial thiamine pyrophosphate carrier 1 (TPC1) from Yarrowia lipolytica (strain CLIB 122 / E 150) (Yeast).